Consider the following 435-residue polypeptide: MRRSRAFIPTAKEAPSDATLPSHKFLVRGGFINQQGAGLYNFLPLGKIVLEKIRAVVKEELDLAGCNEVQLSFVTPIGLWERSGRSEAMGKEMLRINDRHQNEFVLSPTNEEAMVELVKNRVTSYKDLPLNLYQINTKFRDEARPRYGLLRGREFLMKDGYSFHSSTQDMIREFDLMEETYKKIFTRLGLDFRVVAADSGAIGGDGSKEFHVLADSGEDTLIVCQSCNYGANIETIDEFKDKIDELNEKSYEELKELKIDQKCSCGANLHFKKGIEVGHIFQLGTKYSAALEANFSDENGRSKPFEMATFGIGVSRLVAAIIEQNHDESGCIWTKESAPYIVNIMVSNVKDEAQMSLGEDLYAKLRAAKVDVIFDDTKERFGFKMKDAELIGFPYTLIIGKELEGGLVQIFDRKTKESISVESSSAYDKIMELIK.

This sequence belongs to the class-II aminoacyl-tRNA synthetase family. ProS type 2 subfamily. As to quaternary structure, homodimer.

It is found in the cytoplasm. The enzyme catalyses tRNA(Pro) + L-proline + ATP = L-prolyl-tRNA(Pro) + AMP + diphosphate. Functionally, catalyzes the attachment of proline to tRNA(Pro) in a two-step reaction: proline is first activated by ATP to form Pro-AMP and then transferred to the acceptor end of tRNA(Pro). The polypeptide is Proline--tRNA ligase (proS) (Sulfurimonas denitrificans (strain ATCC 33889 / DSM 1251) (Thiomicrospira denitrificans (strain ATCC 33889 / DSM 1251))).